Consider the following 480-residue polypeptide: Glutamyl-tRNA(Gln) amidotransferase subunit A (480 aa).

Catalysis depends on charge relay system residues lysine 70 and serine 145. The active-site Acyl-ester intermediate is the serine 169.

The protein belongs to the amidase family. GatA subfamily. Heterotrimer of A, B and C subunits.

It catalyses the reaction L-glutamyl-tRNA(Gln) + L-glutamine + ATP + H2O = L-glutaminyl-tRNA(Gln) + L-glutamate + ADP + phosphate + H(+). Its function is as follows. Allows the formation of correctly charged Gln-tRNA(Gln) through the transamidation of misacylated Glu-tRNA(Gln) in organisms which lack glutaminyl-tRNA synthetase. The reaction takes place in the presence of glutamine and ATP through an activated gamma-phospho-Glu-tRNA(Gln). This Lactobacillus delbrueckii subsp. bulgaricus (strain ATCC 11842 / DSM 20081 / BCRC 10696 / JCM 1002 / NBRC 13953 / NCIMB 11778 / NCTC 12712 / WDCM 00102 / Lb 14) protein is Glutamyl-tRNA(Gln) amidotransferase subunit A.